The following is a 190-amino-acid chain: CASP-like protein 2U1 (190 aa).

At 1–16 (MAFTSLLGSDAERKVA) the chain is on the cytoplasmic side. Residues 17-37 (VAEVALRAVLCGLGALAAALV) form a helical membrane-spanning segment. The Extracellular portion of the chain corresponds to 38-59 (ATDTQTRTFFSLQKKATYTDMK). Residues 60–80 (AMVLLVAAAAAAAGYSLLQAA) traverse the membrane as a helical segment. Over 81–100 (RCCCCVALLRTSIRPRARLL) the chain is Cytoplasmic. A helical transmembrane segment spans residues 101-121 (LAWCVFACDQALAYALLAAVV). Residues 122–152 (AALQASVVAKQGLPQLQWMAICALYGAFCRQ) lie on the Extracellular side of the membrane. A helical transmembrane segment spans residues 153-173 (AGAGVACAVAAAVDAALLAFL). Over 174 to 190 (SAFNLFRLYGAKATTTT) the chain is Cytoplasmic.

Belongs to the Casparian strip membrane proteins (CASP) family. As to quaternary structure, homodimer and heterodimers.

The protein localises to the cell membrane. The protein is CASP-like protein 2U1 of Zea mays (Maize).